The following is a 353-amino-acid chain: Mitochondrial distribution and morphology protein 12 (353 aa).

An SMP-LTD domain is found at 1–330; sequence MSFDIKWENL…WPSWICLDMN (330 aa). Acidic residues-rich tracts occupy residues 64–75, 84–103, and 330–342; these read DEFYEDTTDSPE, TGDD…DDDG, and NDDD…EENP. Disordered regions lie at residues 64-140 and 330-353; these read DEFY…NRSR and NDDD…HVGS.

This sequence belongs to the MDM12 family. As to quaternary structure, component of the ER-mitochondria encounter structure (ERMES) or MDM complex, composed of MMM1, MDM10, MDM12 and MDM34. An MMM1 homodimer associates with one molecule of MDM12 on each side in a pairwise head-to-tail manner, and the SMP-LTD domains of MMM1 and MDM12 generate a continuous hydrophobic tunnel for phospholipid trafficking.

It is found in the mitochondrion outer membrane. Its subcellular location is the endoplasmic reticulum membrane. In terms of biological role, component of the ERMES/MDM complex, which serves as a molecular tether to connect the endoplasmic reticulum (ER) and mitochondria. Components of this complex are involved in the control of mitochondrial shape and protein biogenesis, and function in nonvesicular lipid trafficking between the ER and mitochondria. MDM12 is required for the interaction of the ER-resident membrane protein MMM1 and the outer mitochondrial membrane-resident beta-barrel protein MDM10. The MDM12-MMM1 subcomplex functions in the major beta-barrel assembly pathway that is responsible for biogenesis of all mitochondrial outer membrane beta-barrel proteins, and acts in a late step after the SAM complex. The MDM10-MDM12-MMM1 subcomplex further acts in the TOM40-specific pathway after the action of the MDM12-MMM1 complex. Essential for establishing and maintaining the structure of mitochondria and maintenance of mtDNA nucleoids. The polypeptide is Mitochondrial distribution and morphology protein 12 (Candida tropicalis (strain ATCC MYA-3404 / T1) (Yeast)).